Reading from the N-terminus, the 447-residue chain is Glutamine synthetase (447 aa).

The GS beta-grasp domain maps to 20-105 (RDVKFIRTQF…ILGDVYLPDG (86 aa)). The GS catalytic domain occupies 112 to 447 (PRYVLKTAIK…WELSRYLSML (336 aa)). Mg(2+) contacts are provided by glutamate 135 and glutamate 137. Glutamate 187 contributes to the ATP binding site. Mg(2+)-binding residues include glutamate 192 and glutamate 199. L-glutamate is bound by residues 243–244 (NG) and glycine 244. Histidine 248 provides a ligand contact to Mg(2+). Serine 252 is a binding site for ATP. Residues arginine 301, glutamate 307, and arginine 319 each contribute to the L-glutamate site. ATP is bound by residues arginine 319 and arginine 324. Glutamate 336 contributes to the Mg(2+) binding site. Residue arginine 338 participates in L-glutamate binding.

This sequence belongs to the glutamine synthetase family. In terms of assembly, homohexamer. Interacts and forms stable complexes with the regulatory protein GlnK1. It depends on Mg(2+) as a cofactor.

The protein localises to the cytoplasm. It catalyses the reaction L-glutamate + NH4(+) + ATP = L-glutamine + ADP + phosphate + H(+). Directly stimulated by the effector molecule 2-oxoglutarate. Inhibited by GlnK1. 2-oxoglutarate antagonizes the inhibitory effects of GlnK1, but does not prevent GlnK1/GlnA1 complex formation. Its function is as follows. Probably involved in nitrogen metabolism via ammonium assimilation. Catalyzes the ATP-dependent biosynthesis of glutamine from glutamate and ammonia. The protein is Glutamine synthetase of Methanosarcina mazei (strain ATCC BAA-159 / DSM 3647 / Goe1 / Go1 / JCM 11833 / OCM 88) (Methanosarcina frisia).